The primary structure comprises 223 residues: Alpha-S2-casein (223 aa).

The signal sequence occupies residues 1 to 15 (MKFFIFTCLLAVALA). 11 positions are modified to phosphoserine: S23, S24, S25, S72, S73, S74, S77, S145, S147, S151, and S159. The stretch at residues 77-141 (SAEVAPEEIK…AGPFTPTVNR (65 aa)) is a repeat. The stretch at residues 159–223 (STEVFTKKTK…TNAIPYVRYL (65 aa)) is a repeat.

The protein belongs to the alpha-casein family. Mammary gland specific. Secreted in milk.

The protein resides in the secreted. Important role in the capacity of milk to transport calcium phosphate. The chain is Alpha-S2-casein (CSN1S2) from Capra hircus (Goat).